The chain runs to 620 residues: Glutathione-regulated potassium-efflux system protein KefC (620 aa).

The next 12 membrane-spanning stretches (helical) occupy residues 4-24 (HTLL…PIAV), 26-46 (LGLG…PWGL), 54-74 (SILH…GLEL), 90-110 (GALQ…FLGL), 114-134 (VAEL…MQAM), 149-169 (FAVL…IPLL), 178-198 (LGAF…VVVL), 218-238 (VFSA…EEVG), 270-290 (GLLL…GTLV), 294-314 (LRIL…LWLV), 327-347 (WFAV…GAAQ), and 359-379 (ALTL…VLLT). The RCK N-terminal domain maps to 399–518 (QPRVIVAGFG…AGVAMPERET (120 aa)). Positions 599–620 (QGTAEGKHSGEVADEPEVKPSI) are disordered.

It belongs to the monovalent cation:proton antiporter 2 (CPA2) transporter (TC 2.A.37) family. KefC subfamily. In terms of assembly, homodimer. Interacts with the regulatory subunit KefF.

The protein resides in the cell inner membrane. Pore-forming subunit of a potassium efflux system that confers protection against electrophiles. Catalyzes K(+)/H(+) antiport. This is Glutathione-regulated potassium-efflux system protein KefC from Salmonella paratyphi B (strain ATCC BAA-1250 / SPB7).